Consider the following 510-residue polypeptide: NAD(P)H-quinone oxidoreductase subunit 2 B, chloroplastic (510 aa).

Helical transmembrane passes span 24–44 (LLLFDGSFIFPECILIFGLIL), 57–77 (IPWLYFISSTSLVMSITALLF), 99–119 (IFQFLILLCSTLCIPLSVEYI), 124–144 (MAIAEFLLFVLTATLGGMFLC), 149–169 (LITIFVAPECFSLCSYLLSGY), 183–203 (YLLMGGASSSILVHGFSWLYG), 227–247 (PGISIALIFITVGIGFKLSPA), 295–315 (WHLLLEILAILSMILGNLIAI), 323–343 (MLAYSSIGQIGYVIIGIIVGN), 354–374 (YMLFYISMNLGTFACIVLFGL), 395–415 (ALSLAPCLLSLGGLPPLAGFF), 418–438 (LHLFWCGWQAGLYFLVSIGLL), and 484–504 (MIVCVIASTIPGISMNPIIAI).

Belongs to the complex I subunit 2 family. NDH is composed of at least 16 different subunits, 5 of which are encoded in the nucleus.

The protein resides in the plastid. It is found in the chloroplast thylakoid membrane. It catalyses the reaction a plastoquinone + NADH + (n+1) H(+)(in) = a plastoquinol + NAD(+) + n H(+)(out). The catalysed reaction is a plastoquinone + NADPH + (n+1) H(+)(in) = a plastoquinol + NADP(+) + n H(+)(out). In terms of biological role, NDH shuttles electrons from NAD(P)H:plastoquinone, via FMN and iron-sulfur (Fe-S) centers, to quinones in the photosynthetic chain and possibly in a chloroplast respiratory chain. The immediate electron acceptor for the enzyme in this species is believed to be plastoquinone. Couples the redox reaction to proton translocation, and thus conserves the redox energy in a proton gradient. In Gossypium barbadense (Sea Island cotton), this protein is NAD(P)H-quinone oxidoreductase subunit 2 B, chloroplastic.